Consider the following 83-residue polypeptide: uncharacterized protein (83 aa).

This is an uncharacterized protein from Archaeoglobus fulgidus (strain ATCC 49558 / DSM 4304 / JCM 9628 / NBRC 100126 / VC-16).